A 334-amino-acid polypeptide reads, in one-letter code: tRNA dimethylallyltransferase (334 aa).

Residue 23-30 participates in ATP binding; it reads GPTGAGKT. 25–30 contacts substrate; it reads TGAGKT. 2 interaction with substrate tRNA regions span residues 53 to 56 and 177 to 181; these read DSAL and QRVQR.

It belongs to the IPP transferase family. Monomer. The cofactor is Mg(2+).

It catalyses the reaction adenosine(37) in tRNA + dimethylallyl diphosphate = N(6)-dimethylallyladenosine(37) in tRNA + diphosphate. Catalyzes the transfer of a dimethylallyl group onto the adenine at position 37 in tRNAs that read codons beginning with uridine, leading to the formation of N6-(dimethylallyl)adenosine (i(6)A). The chain is tRNA dimethylallyltransferase from Polynucleobacter necessarius subsp. necessarius (strain STIR1).